Consider the following 163-residue polypeptide: Transcription elongation factor GreA (163 aa).

The stretch at 12–73 (YEKIQKEFEA…ELSDLLARAQ (62 aa)) forms a coiled coil.

Belongs to the GreA/GreB family.

Its function is as follows. Necessary for efficient RNA polymerase transcription elongation past template-encoded arresting sites. The arresting sites in DNA have the property of trapping a certain fraction of elongating RNA polymerases that pass through, resulting in locked ternary complexes. Cleavage of the nascent transcript by cleavage factors such as GreA or GreB allows the resumption of elongation from the new 3'terminus. GreA releases sequences of 2 to 3 nucleotides. The sequence is that of Transcription elongation factor GreA from Nitratiruptor sp. (strain SB155-2).